Reading from the N-terminus, the 123-residue chain is Phosphoribosyl-AMP cyclohydrolase (123 aa).

A Mg(2+)-binding site is contributed by Asp76. Cys77 lines the Zn(2+) pocket. Positions 78 and 80 each coordinate Mg(2+). Zn(2+)-binding residues include Cys93 and Cys100.

The protein belongs to the PRA-CH family. As to quaternary structure, homodimer. Requires Mg(2+) as cofactor. It depends on Zn(2+) as a cofactor.

It localises to the cytoplasm. It carries out the reaction 1-(5-phospho-beta-D-ribosyl)-5'-AMP + H2O = 1-(5-phospho-beta-D-ribosyl)-5-[(5-phospho-beta-D-ribosylamino)methylideneamino]imidazole-4-carboxamide. Its pathway is amino-acid biosynthesis; L-histidine biosynthesis; L-histidine from 5-phospho-alpha-D-ribose 1-diphosphate: step 3/9. Catalyzes the hydrolysis of the adenine ring of phosphoribosyl-AMP. This chain is Phosphoribosyl-AMP cyclohydrolase, found in Methanocorpusculum labreanum (strain ATCC 43576 / DSM 4855 / Z).